A 346-amino-acid chain; its full sequence is MTETLTIRRPDDWHVHLRDRDVLRGVVPYTARQFARAIVMPNLSPPMTDVAGVAAYRDRILAALPQGSAFTPLMTLYLTDSTDIEEVARGFAEGVFVAAKLYPAHATTGSAHGVTDIRNIYPVLEKMQEIGMPLLIHGEVTDSHVDIFDREAVFIERTLTRLVADMPALRIVFEHITTEEAAQFVEGAGDSIAATITPQHLHINRNAMLVGGIRPHAFCLPVAKREKHRLALRKLATSGFSRVFLGTDTAPHAKHLKEAACGCAGIFNAPFALESYVTVFDEEGALDRFEAFASLNGPAFYRMPVNEDRIVLERAPIEVPEVIDCNGTAIVPFHAGETLGWRIAAA.

Residues H14 and H16 each contribute to the Zn(2+) site. Substrate-binding positions include 16 to 18 (HLR) and N42. Positions 100, 137, and 175 each coordinate Zn(2+). K100 carries the N6-carboxylysine modification. H137 contributes to the substrate binding site. Residue L220 participates in substrate binding. D248 contacts Zn(2+). Residue D248 is part of the active site. Substrate is bound by residues H252 and A264.

It belongs to the metallo-dependent hydrolases superfamily. DHOase family. Class II DHOase subfamily. As to quaternary structure, homodimer. Zn(2+) serves as cofactor.

The enzyme catalyses (S)-dihydroorotate + H2O = N-carbamoyl-L-aspartate + H(+). The protein operates within pyrimidine metabolism; UMP biosynthesis via de novo pathway; (S)-dihydroorotate from bicarbonate: step 3/3. Its function is as follows. Catalyzes the reversible cyclization of carbamoyl aspartate to dihydroorotate. This is Dihydroorotase from Novosphingobium aromaticivorans (strain ATCC 700278 / DSM 12444 / CCUG 56034 / CIP 105152 / NBRC 16084 / F199).